The chain runs to 356 residues: Ferrochelatase (356 aa).

Residues His214 and Glu295 each coordinate Fe cation.

The protein belongs to the ferrochelatase family.

The protein resides in the cytoplasm. The enzyme catalyses heme b + 2 H(+) = protoporphyrin IX + Fe(2+). It functions in the pathway porphyrin-containing compound metabolism; protoheme biosynthesis; protoheme from protoporphyrin-IX: step 1/1. Catalyzes the ferrous insertion into protoporphyrin IX. This is Ferrochelatase from Paraburkholderia phytofirmans (strain DSM 17436 / LMG 22146 / PsJN) (Burkholderia phytofirmans).